A 387-amino-acid polypeptide reads, in one-letter code: Odorant receptor 19a (387 aa).

The Cytoplasmic portion of the chain corresponds to 1–40 (MDISKVDSTRALVNHWRIFRIMGIHPPGKRTFWGRHYTAY). A helical membrane pass occupies residues 41-61 (SMVWNVTFHICIWVSFSVNLL). At 62-71 (QSNSLETFCE) the chain is on the extracellular side. Residues 72 to 92 (SLCVTMPHTLYMLKLINVRRM) form a helical membrane-spanning segment. Over 93–127 (RGQMISSHWLLRLLDKRLGCDDERQIIMAGIERAE) the chain is Cytoplasmic. Residues 128-148 (FIFRTIFRGLACTVVLGIIYI) form a helical membrane-spanning segment. The Extracellular segment spans residues 149–171 (SASSEPTLMYPTWIPWNWRDSTS). The chain crosses the membrane as a helical span at residues 172 to 192 (AYLATAMLHTTALMANATLVL). The Cytoplasmic portion of the chain corresponds to 193–254 (NLSSYPGTYL…LRLFKSLERS (62 aa)). Residues 255-275 (LSMTCFLQFFSTACAQCTICY) traverse the membrane as a helical segment. At 276–285 (FLLFGNVGIM) the chain is on the extracellular side. The helical transmembrane segment at 286–306 (RFMNMLFLLVILTTETLLLCY) threads the bilayer. Residues 307-336 (TAELPCKEGESLLTAVYSCNWLSQSVNFRR) are Cytoplasmic-facing. A helical transmembrane segment spans residues 337 to 357 (LLLLMLARCQIPMILVSGVIV). Topologically, residues 358 to 387 (PISMKTFTVMIKGAYTMLTLLNEIRKTSLE) are extracellular.

It belongs to the insect chemoreceptor superfamily. Heteromeric odorant receptor channel (TC 1.A.69) family. Or2a subfamily. Interacts with Orco. Complexes exist early in the endomembrane system in olfactory sensory neurons (OSNs), coupling these complexes to the conserved ciliary trafficking pathway. In terms of tissue distribution, expressed in ai2A olfactory sensory neurons in the antenna.

The protein localises to the cell membrane. Odorant receptor which mediates acceptance or avoidance behavior, depending on its substrates. The odorant receptor repertoire encodes a large collection of odor stimuli that vary widely in identity, intensity, and duration. May form a complex with Orco to form odorant-sensing units, providing sensitive and prolonged odorant signaling and calcium permeability. Involved in the preference for citrus fruits for oviposition, especially through the response to valencene, the primary ligand of Or19a. Larvae growing on citrus fruits suffer a reduced risk of parasitism since endoparasitoid wasps that parasitize larvae are strongly repelled by the smell of citrus, as well as by valencene. In Drosophila melanogaster (Fruit fly), this protein is Odorant receptor 19a (Or19a).